A 320-amino-acid polypeptide reads, in one-letter code: MRSKSKQVLLLWLEGFREACSLHRVVILCLRSRKLLLRTGQCFLLNGLIFLGSLGVFKWFIDPSLQWILPDQCSPLTSQEFCSYGGFYAFLRGGLLQLFYVFWFYPLYMLSFILSNIWYNDIAKHGFEAIEISDLNSAEALRQGEALASLNMANAERPSGLGGVMIGIGEQVYSILLLTFFFLEVCVVGVIPYIGKILNFLLLSWMYAYYCYEYKWNFSGISLKKRLDFFQSNWAFFAGFGSPCVLAIFFLSPLVSGALMAILFPLFVLTATGSGPEKLIGAPRRTWKCAGLGKLPIFYIADTLSMLALSIFRLESPHEN.

3 helical membrane-spanning segments follow: residues 41-61 (QCFLLNGLIFLGSLGVFKWFI), 94-114 (GLLQLFYVFWFYPLYMLSFIL), and 175-195 (ILLLTFFFLEVCVVGVIPYIG). The N-linked (GlcNAc...) asparagine glycan is linked to asparagine 217. 3 helical membrane passes run 227-247 (LDFFQSNWAFFAGFGSPCVLA), 248-268 (IFFLSPLVSGALMAILFPLFV), and 292-312 (LGKLPIFYIADTLSMLALSIF).

This sequence belongs to the EI24 (TC 9.B.7) family.

The protein localises to the membrane. This chain is Protein EI24 homolog, found in Arabidopsis thaliana (Mouse-ear cress).